A 613-amino-acid chain; its full sequence is Glutaminase 1 (613 aa).

Positions 33–315 (GAVADYIPEL…LSSHYDLHML (283 aa)) are glutaminase. Ser75, Asn124, Glu168, Asn175, Tyr199, Tyr251, and Val269 together coordinate substrate. Residues 345 to 457 (REILAAHEQE…LDTAIEWAED (113 aa)) form the STAS domain. An a nucleoside 3',5'-cyclic phosphate-binding site is contributed by 480–595 (LLEGLSADEL…ERIMRNLAQL (116 aa)).

This sequence belongs to the glutaminase family. In terms of assembly, homotetramer.

It carries out the reaction L-glutamine + H2O = L-glutamate + NH4(+). The protein is Glutaminase 1 (glsA1) of Bradyrhizobium diazoefficiens (strain JCM 10833 / BCRC 13528 / IAM 13628 / NBRC 14792 / USDA 110).